A 232-amino-acid polypeptide reads, in one-letter code: Sugar fermentation stimulation protein homolog (232 aa).

Belongs to the SfsA family.

The protein is Sugar fermentation stimulation protein homolog of Ruegeria sp. (strain TM1040) (Silicibacter sp.).